The sequence spans 169 residues: Peptide deformylase (169 aa).

2 residues coordinate Fe cation: cysteine 91 and histidine 133. Residue glutamate 134 is part of the active site. A Fe cation-binding site is contributed by histidine 137.

The protein belongs to the polypeptide deformylase family. Fe(2+) is required as a cofactor.

The catalysed reaction is N-terminal N-formyl-L-methionyl-[peptide] + H2O = N-terminal L-methionyl-[peptide] + formate. Removes the formyl group from the N-terminal Met of newly synthesized proteins. Requires at least a dipeptide for an efficient rate of reaction. N-terminal L-methionine is a prerequisite for activity but the enzyme has broad specificity at other positions. This is Peptide deformylase from Pectobacterium atrosepticum (strain SCRI 1043 / ATCC BAA-672) (Erwinia carotovora subsp. atroseptica).